A 62-amino-acid chain; its full sequence is Photosystem II reaction center protein Z (62 aa).

2 helical membrane passes run 8-28 (AVFASIAIPFILVIGVPVVLA) and 41-61 (FSGASSWIGLVFLVGILNSLI).

It belongs to the PsbZ family. In terms of assembly, PSII is composed of 1 copy each of membrane proteins PsbA, PsbB, PsbC, PsbD, PsbE, PsbF, PsbH, PsbI, PsbJ, PsbK, PsbL, PsbM, PsbT, PsbY, PsbZ, Psb30/Ycf12, at least 3 peripheral proteins of the oxygen-evolving complex and a large number of cofactors. It forms dimeric complexes.

The protein localises to the plastid. Its subcellular location is the chloroplast thylakoid membrane. Functionally, may control the interaction of photosystem II (PSII) cores with the light-harvesting antenna, regulates electron flow through the 2 photosystem reaction centers. PSII is a light-driven water plastoquinone oxidoreductase, using light energy to abstract electrons from H(2)O, generating a proton gradient subsequently used for ATP formation. This chain is Photosystem II reaction center protein Z, found in Huperzia lucidula (Shining clubmoss).